We begin with the raw amino-acid sequence, 1277 residues long: MAIVDDAEMRLTESEAVSSSDDRKIVADTPDFIDESSLVIRTTTGVRISALPAEQSLVDSDGSNSEVTLPAKDEVISDGFTCVNKEIVESDSFREQNLEIGEPDLDVENRKEAMIIDSIENSVVEIVSSASGDDCNVKVEVVEPELLVENLVVAKEEEEMIVDSIEDSVVEIVSTASGCDCNVKVEVVDPELCVDNLVVVKEEEMIADSIAESVVETVSRGLDYECVDVKVKEEPDLGTKLEEDSVFPNVLEKKDEVIKVLEDQPSEINKKLEQENDDLFSSGDSDGTSAKRRKMEMESYAPVGVESCILAPTPLRVVKPEKLDTPEVIDLESEKSYTHVKMEPVEEIKVEAVKMSSQVEDVKFSREQKSVYVKKEPVGARKVKVEDGDFPVEKDWYLVGRSLVTATSTSKGRKLEDNEIVNFTFSSVAKWKVPNIVRFSTKRCGEIGRLPMEWSNWAVSLLRSGKVKMLGRCVAAPPFLTMMQEIMLYVSFYIHSSIFTDVSKSTWRIGSSPNLESTLHPLLQLFKHLTIKPYQKAEFTPEELNSRKRSLNLEDDYDERAALLAIAKRRKGCQQSLEQNKDEEEAPESYMNRVVGAADSYNLEEMEAPSTLTCNLRPYQKQALYWMSESEKGIDVEKAAETLHPCWEAYRICDERAPSIYLNIFSGEATIQFPTATQMARGGILADAMGLGKTVMTIALILARPGRGNPENEDVLVADVNADKRNRKEIHMALTTVKAKGGTLIICPMALLSQWKDELETHSKPDTVSVLVYYGGDRTHDAKAIASHDVVLTTYGVLTSAYKQDMANSIFHRIDWYRIVLDEAHTIKSWKTQAAKATFELSSHCRWCLTGTPLQNKLEDLYSLLCFLHVEPWCNWAWWSKLIQKPYENGDPRGLKLIKAILRPLMLRRTKETRDKEGSLILELPPTDVQVIECEQSEAERDFYTALFKRSKVQFDQFVAQGKVLHNYANILELLLRLRQCCNHPFLVMSRADSQQYADLDSLARRFLDNNPDSVSQNAPSRAYIEEVIQDLRDGNSKECPICLESADDPVLTPCAHRMCRECLLTSWRSPSCGLCPICRTILKRTELISCPTDSIFRVDVVKNWKESSKVSELLKCLEKIKKSGSGEKSIVFSQWTSFLDLLEIPLRRRGFEFLRFDGKLAQKGREKVLKEFNETKQKTILLMSLKAGGVGLNLTAASSVFLMDPWWNPAVEEQAIMRIHRIGQKRTVFVRRFIVKDTVEERMQQVQARKQRMIAGALTDEEVRSARLEELKMLFR.

Residues 271–293 (KLEQENDDLFSSGDSDGTSAKRR) are disordered. A Helicase ATP-binding domain is found at 674–871 (PTATQMARGG…YSLLCFLHVE (198 aa)). 687-694 (DAMGLGKT) provides a ligand contact to ATP. The DEAH box motif lies at 822 to 825 (DEAH). An RING-type zinc finger spans residues 1040 to 1080 (CPICLESADDPVLTPCAHRMCRECLLTSWRSPSCGLCPICR). The Helicase C-terminal domain occupies 1113-1277 (ELLKCLEKIK…RLEELKMLFR (165 aa)).

This sequence belongs to the SNF2/RAD54 helicase family. RAD16 subfamily.

The protein resides in the nucleus. In terms of biological role, possesses intrinsic ATP-dependent nucleosome-remodeling activity. This activity may be required for DNA repair. Does not seem to be required for DNA repair and regulation of homologous recombination (HR). This Arabidopsis thaliana (Mouse-ear cress) protein is DNA repair protein RAD5B.